Here is a 312-residue protein sequence, read N- to C-terminus: Cell division control protein 2 homolog D (312 aa).

In terms of domain architecture, Protein kinase spans 14–304 (FVKLEKVGEG…AKKAMEHPYF (291 aa)). ATP-binding positions include 20–28 (VGEGTYGKV) and Lys43. At Thr24 the chain carries Phosphothreonine. Tyr25 carries the post-translational modification Phosphotyrosine. The active-site Proton acceptor is the Asp145. Residue Thr179 is modified to Phosphothreonine; by CAK.

It belongs to the protein kinase superfamily. CMGC Ser/Thr protein kinase family. CDC2/CDKX subfamily.

The enzyme catalyses L-seryl-[protein] + ATP = O-phospho-L-seryl-[protein] + ADP + H(+). It carries out the reaction L-threonyl-[protein] + ATP = O-phospho-L-threonyl-[protein] + ADP + H(+). The catalysed reaction is [DNA-directed RNA polymerase] + ATP = phospho-[DNA-directed RNA polymerase] + ADP + H(+). Its function is as follows. Plays a key role in the control of the eukaryotic cell cycle. The polypeptide is Cell division control protein 2 homolog D (CDC2D) (Antirrhinum majus (Garden snapdragon)).